A 776-amino-acid chain; its full sequence is Transcriptional regulator QRICH1 (776 aa).

Position 1 is an N-acetylmethionine (M1). The CARD domain maps to 6 to 48; the sequence is ENTISFEEYIRVKARSVPQHRMKEFLDSLASKGPEALQEFQQT. Disordered stretches follow at residues 139–164 and 218–240; these read IQGQ…PSQL and ALSP…GTAS. A Phosphoserine modification is found at S345. Residues K353 and K358 each participate in a glycyl lysine isopeptide (Lys-Gly) (interchain with G-Cter in SUMO2) cross-link. A compositionally biased stretch (low complexity) spans 419 to 429; sequence QQQPQQQTPQE. Residues 419-441 form a disordered region; that stretch reads QQQPQQQTPQEQTPPPQQQQQQL. S464 is subject to Phosphoserine.

The protein resides in the nucleus. Its subcellular location is the cytoplasm. The protein localises to the cell membrane. Transcriptional regulator that acts as a mediator of the integrated stress response (ISR) through transcriptional control of protein homeostasis under conditions of ER stress. Controls the outcome of the unfolded protein response (UPR) which is an ER-stress response pathway. ER stress induces QRICH1 translation by a ribosome translation re-initiation mechanism in response to EIF2S1/eIF-2-alpha phosphorylation, and stress-induced QRICH1 regulates a transcriptional program associated with protein translation, protein secretion-mediated proteotoxicity and cell death during the terminal UPR. May cooperate with ATF4 transcription factor signaling to regulate ER homeostasis which is critical for cell viability. Up-regulates CASP3/caspase-3 activity in epithelial cells under ER stress. Central regulator of proteotoxicity associated with ER stress-mediated inflammatory diseases in the intestines and liver. Involved in chondrocyte hypertrophy, a process required for normal longitudinal bone growth. The chain is Transcriptional regulator QRICH1 from Homo sapiens (Human).